Here is a 1879-residue protein sequence, read N- to C-terminus: Protein TIC 214 (1879 aa).

6 helical membrane-spanning segments follow: residues 18-38 (IINS…FSIG), 67-87 (FITG…HLAL), 90-110 (PHTI…WNNH), 127-147 (LSIQ…HFIL), 175-195 (VGWL…LVWI), and 218-238 (IFSI…PSPI). A disordered region spans residues 243–291 (LKETEERGESEEERDVEKTSETKGTKQEQEGSTEEDPSPSLFSEEKEDP). Residues 257–271 (DVEKTSETKGTKQEQ) are compositionally biased toward basic and acidic residues.

This sequence belongs to the TIC214 family. Part of the Tic complex.

The protein localises to the plastid. It is found in the chloroplast inner membrane. In terms of biological role, involved in protein precursor import into chloroplasts. May be part of an intermediate translocation complex acting as a protein-conducting channel at the inner envelope. The protein is Protein TIC 214 of Morus indica (Mulberry).